A 64-amino-acid chain; its full sequence is Toxin BmCa-1 (64 aa).

The first 18 residues, 1 to 18 (MNTFVVVFLLLTAILCHA), serve as a signal peptide directing secretion. The propeptide occupies 19-27 (EHALDETAR). Intrachain disulfides connect C29–C43, C36–C49, and C42–C58.

This sequence belongs to the scorpion calcin-like family. As to expression, expressed by the venom gland.

The protein localises to the secreted. Its function is as follows. May increase intracellular calcium release through the activation of nuclear inositol 1,4,5-trisphosphate receptors (ITPR) of cardiomyocytes, thereby causing an increase in the contraction frequency of these cells. This Olivierus martensii (Manchurian scorpion) protein is Toxin BmCa-1.